The chain runs to 99 residues: Small ribosomal subunit protein uS19c (99 aa).

This sequence belongs to the universal ribosomal protein uS19 family.

The protein resides in the plastid. It localises to the chloroplast. Functionally, protein S19 forms a complex with S13 that binds strongly to the 16S ribosomal RNA. This Oenothera biennis (German evening primrose) protein is Small ribosomal subunit protein uS19c.